The sequence spans 354 residues: UDP-N-acetylglucosamine--N-acetylmuramyl-(pentapeptide) pyrophosphoryl-undecaprenol N-acetylglucosamine transferase (354 aa).

UDP-N-acetyl-alpha-D-glucosamine is bound by residues 15-17, N127, R163, S191, I244, 263-268, and Q288; these read TGG and ALTVSE.

This sequence belongs to the glycosyltransferase 28 family. MurG subfamily.

It is found in the cell inner membrane. The catalysed reaction is di-trans,octa-cis-undecaprenyl diphospho-N-acetyl-alpha-D-muramoyl-L-alanyl-D-glutamyl-meso-2,6-diaminopimeloyl-D-alanyl-D-alanine + UDP-N-acetyl-alpha-D-glucosamine = di-trans,octa-cis-undecaprenyl diphospho-[N-acetyl-alpha-D-glucosaminyl-(1-&gt;4)]-N-acetyl-alpha-D-muramoyl-L-alanyl-D-glutamyl-meso-2,6-diaminopimeloyl-D-alanyl-D-alanine + UDP + H(+). Its pathway is cell wall biogenesis; peptidoglycan biosynthesis. Functionally, cell wall formation. Catalyzes the transfer of a GlcNAc subunit on undecaprenyl-pyrophosphoryl-MurNAc-pentapeptide (lipid intermediate I) to form undecaprenyl-pyrophosphoryl-MurNAc-(pentapeptide)GlcNAc (lipid intermediate II). The chain is UDP-N-acetylglucosamine--N-acetylmuramyl-(pentapeptide) pyrophosphoryl-undecaprenol N-acetylglucosamine transferase from Aliivibrio fischeri (strain MJ11) (Vibrio fischeri).